Consider the following 188-residue polypeptide: MSANEDQEMELEALRSIYEGDESFRELSPVSFQYRIGENGDPKAFLIEISWTETYPQTPPILSMNAFFNNTISSAVKQSILAKLQEAVEANLGTAMTYTLFEYAKDNKEQFMENHNPINSATSISNIISIETPNTAPSSKKKDKKEQLSKAQKRKLADKTDHKGELPRGWNWVDVVKHLSKTGSKDDE.

An N-acetylserine modification is found at Ser-2. Positions 9–111 constitute an RWD domain; sequence MELEALRSIY…EYAKDNKEQF (103 aa). The interval 132–167 is disordered; it reads TPNTAPSSKKKDKKEQLSKAQKRKLADKTDHKGELP. A compositionally biased stretch (basic and acidic residues) spans 155–166; the sequence is KLADKTDHKGEL.

This is RWD domain-containing protein 4 (RWDD4) from Homo sapiens (Human).